The sequence spans 393 residues: Chalcone synthase DII (393 aa).

Cysteine 164 is a catalytic residue.

It belongs to the thiolase-like superfamily. Chalcone/stilbene synthases family.

The catalysed reaction is (E)-4-coumaroyl-CoA + 3 malonyl-CoA + 3 H(+) = 2',4,4',6'-tetrahydroxychalcone + 3 CO2 + 4 CoA. It participates in secondary metabolite biosynthesis; flavonoid biosynthesis. Functionally, the primary product of this enzyme is 4,2',4',6'-tetrahydroxychalcone (also termed naringenin-chalcone or chalcone) which can under specific conditions spontaneously isomerize into naringenin. This is Chalcone synthase DII (CHS-DII) from Ipomoea batatas (Sweet potato).